Reading from the N-terminus, the 124-residue chain is Small ribosomal subunit protein uS12 (124 aa).

The interval 1 to 25 (MPTINQLIRKPRKSQKEKTASPALQ) is disordered. At aspartate 89 the chain carries 3-methylthioaspartic acid.

Belongs to the universal ribosomal protein uS12 family. In terms of assembly, part of the 30S ribosomal subunit. Contacts proteins S8 and S17. May interact with IF1 in the 30S initiation complex.

With S4 and S5 plays an important role in translational accuracy. Its function is as follows. Interacts with and stabilizes bases of the 16S rRNA that are involved in tRNA selection in the A site and with the mRNA backbone. Located at the interface of the 30S and 50S subunits, it traverses the body of the 30S subunit contacting proteins on the other side and probably holding the rRNA structure together. The combined cluster of proteins S8, S12 and S17 appears to hold together the shoulder and platform of the 30S subunit. The chain is Small ribosomal subunit protein uS12 from Borrelia turicatae (strain 91E135).